Consider the following 299-residue polypeptide: Exosome complex component rrp42 (299 aa).

This sequence belongs to the RNase PH family. As to quaternary structure, component of the RNA exosome complex. Specifically part of the catalytically inactive RNA exosome core complex (Exo-9) which may associate with the catalytic subunits rrp6 and dis3 in cytoplasmic- and nuclear-specific RNA exosome complex forms. Exo-9 is formed by a hexameric base ring of RNase PH domain-containing subunits and a cap ring consisting of csl4, rrp4 and rrp40.

The protein localises to the cytoplasm. It localises to the nucleus. The protein resides in the nucleolus. Its function is as follows. Non-catalytic component of the RNA exosome complex which has 3'-&gt;5' exoribonuclease activity and participates in a multitude of cellular RNA processing and degradation events. In the nucleus, the RNA exosome complex is involved in proper maturation of stable RNA species such as rRNA, snRNA and snoRNA, in the elimination of RNA processing by-products and non-coding 'pervasive' transcripts, such as antisense RNA species and cryptic unstable transcripts (CUTs), and of mRNAs with processing defects, thereby limiting or excluding their export to the cytoplasm. In the cytoplasm, the RNA exosome complex is involved in general mRNA turnover and in RNA surveillance pathways, preventing translation of aberrant mRNAs. The catalytic inactive RNA exosome core complex of 9 subunits (Exo-9) is proposed to play a pivotal role in the binding and presentation of RNA for ribonucleolysis, and to serve as a scaffold for the association with catalytic subunits and accessory proteins or complexes. ski6 is part of the hexameric ring of RNase PH domain-containing subunits proposed to form a central channel which threads RNA substrates for degradation. In Schizosaccharomyces pombe (strain 972 / ATCC 24843) (Fission yeast), this protein is Exosome complex component rrp42 (rrp42).